We begin with the raw amino-acid sequence, 341 residues long: Glycerol-3-phosphate dehydrogenase [NAD(P)+] (341 aa).

The NADPH site is built by Ser-15, Trp-16, Arg-36, and Lys-110. The sn-glycerol 3-phosphate site is built by Lys-110, Gly-139, and Ser-141. Ala-143 provides a ligand contact to NADPH. The sn-glycerol 3-phosphate site is built by Lys-194, Asp-247, Ser-257, Arg-258, and Asn-259. Lys-194 (proton acceptor) is an active-site residue. Arg-258 is a binding site for NADPH. NADPH-binding residues include Val-282 and Glu-284.

This sequence belongs to the NAD-dependent glycerol-3-phosphate dehydrogenase family.

It is found in the cytoplasm. The catalysed reaction is sn-glycerol 3-phosphate + NAD(+) = dihydroxyacetone phosphate + NADH + H(+). It catalyses the reaction sn-glycerol 3-phosphate + NADP(+) = dihydroxyacetone phosphate + NADPH + H(+). The protein operates within membrane lipid metabolism; glycerophospholipid metabolism. Catalyzes the reduction of the glycolytic intermediate dihydroxyacetone phosphate (DHAP) to sn-glycerol 3-phosphate (G3P), the key precursor for phospholipid synthesis. The protein is Glycerol-3-phosphate dehydrogenase [NAD(P)+] of Stenotrophomonas maltophilia (strain R551-3).